The primary structure comprises 283 residues: ATP phosphoribosyltransferase (283 aa).

It belongs to the ATP phosphoribosyltransferase family. Long subfamily. It depends on Mg(2+) as a cofactor.

Its subcellular location is the cytoplasm. It catalyses the reaction 1-(5-phospho-beta-D-ribosyl)-ATP + diphosphate = 5-phospho-alpha-D-ribose 1-diphosphate + ATP. It functions in the pathway amino-acid biosynthesis; L-histidine biosynthesis; L-histidine from 5-phospho-alpha-D-ribose 1-diphosphate: step 1/9. With respect to regulation, feedback inhibited by histidine. Catalyzes the condensation of ATP and 5-phosphoribose 1-diphosphate to form N'-(5'-phosphoribosyl)-ATP (PR-ATP). Has a crucial role in the pathway because the rate of histidine biosynthesis seems to be controlled primarily by regulation of HisG enzymatic activity. In Phocaeicola vulgatus (strain ATCC 8482 / DSM 1447 / JCM 5826 / CCUG 4940 / NBRC 14291 / NCTC 11154) (Bacteroides vulgatus), this protein is ATP phosphoribosyltransferase.